Here is a 358-residue protein sequence, read N- to C-terminus: Trace amine-associated receptor 7b (358 aa).

Residues 1-47 lie on the Extracellular side of the membrane; it reads MATDNDSFPWDQDSILSSDMFSATSTELCYENLNRSCVRSPYSPGPR. Asparagine 5 and asparagine 34 each carry an N-linked (GlcNAc...) asparagine glycan. 2 cysteine pairs are disulfide-bonded: cysteine 37–cysteine 201 and cysteine 120–cysteine 205. The helical transmembrane segment at 48 to 68 threads the bilayer; the sequence is LILYAVFGFGAALAVCGNLLV. Residues 69 to 83 lie on the Cytoplasmic side of the membrane; sequence MTSILHFRQLHSPAN. A helical transmembrane segment spans residues 84–104; that stretch reads FLVVSLACADFLVGLTVMPFS. The Extracellular portion of the chain corresponds to 105-121; it reads TVRSVEGCWYFGESYCK. A helical transmembrane segment spans residues 122–143; the sequence is LHTCFDVSFCYCSIFHLCFISV. Residues 144–166 lie on the Cytoplasmic side of the membrane; that stretch reads DRYIAVSDPLTYPTRFTAFVSGK. The helical transmembrane segment at 167–187 threads the bilayer; sequence CITFSWLLSTIYGFSLLYTGA. The Extracellular segment spans residues 188–212; that stretch reads NEAGLEDLVSALTCVGGCQLAVNQS. An N-linked (GlcNAc...) asparagine glycan is attached at asparagine 210. The helical transmembrane segment at 213-233 threads the bilayer; sequence WVFINFLLFLIPTLVMITVYS. The Cytoplasmic portion of the chain corresponds to 234 to 274; it reads KIFLIAKQQAQNIEKMSKQTARASDSYKDRVAKRERKAAKT. The helical transmembrane segment at 275–295 threads the bilayer; it reads LGIAVAAFLLSWLPYFIDSII. Topologically, residues 296–309 are extracellular; the sequence is DAFLGFITPTYVYE. Residues 310-333 traverse the membrane as a helical segment; that stretch reads ILVWIAYYNSAMNPLIYAFFYPWF. The Cytoplasmic segment spans residues 334-358; sequence RKAIKLIVSGKVLRENSSTTNLFPE.

It belongs to the G-protein coupled receptor 1 family. In terms of tissue distribution, specifically expressed in neurons of the olfactory epithelium.

The protein resides in the cell membrane. In terms of biological role, olfactory receptor specific for N,N-dimethylalkylamines trace amines, such as N,N-dimethylcyclohexylamine. Trace amine compounds are enriched in animal body fluids and act on trace amine-associated receptors (TAARs) to elicit both intraspecific and interspecific innate behaviors. Ligand-binding causes a conformation change that triggers signaling via G(s)-class of G alpha proteins (GNAL or GNAS). The protein is Trace amine-associated receptor 7b of Mus musculus (Mouse).